Here is a 394-residue protein sequence, read N- to C-terminus: 8-amino-7-oxononanoate synthase (394 aa).

Arg-21 is a binding site for substrate. A pyridoxal 5'-phosphate-binding site is contributed by 112–113 (GY). Residue His-137 coordinates substrate. Residues Ser-183, His-211, and Thr-239 each coordinate pyridoxal 5'-phosphate. Position 242 is an N6-(pyridoxal phosphate)lysine (Lys-242). Thr-358 contacts substrate.

The protein belongs to the class-II pyridoxal-phosphate-dependent aminotransferase family. BioF subfamily. Homodimer. Pyridoxal 5'-phosphate is required as a cofactor.

The enzyme catalyses 6-carboxyhexanoyl-[ACP] + L-alanine + H(+) = (8S)-8-amino-7-oxononanoate + holo-[ACP] + CO2. It functions in the pathway cofactor biosynthesis; biotin biosynthesis. In terms of biological role, catalyzes the decarboxylative condensation of pimeloyl-[acyl-carrier protein] and L-alanine to produce 8-amino-7-oxononanoate (AON), [acyl-carrier protein], and carbon dioxide. This Paraburkholderia phymatum (strain DSM 17167 / CIP 108236 / LMG 21445 / STM815) (Burkholderia phymatum) protein is 8-amino-7-oxononanoate synthase.